The primary structure comprises 1533 residues: Glycogen debranching enzyme (1533 aa).

S64 carries the phosphoserine modification. Residues D527, H530, and D628 contribute to the active site.

This sequence belongs to the glycogen debranching enzyme family. As to quaternary structure, monomer. Interacts with NHLRC1/malin. Post-translationally, ubiquitinated.

It localises to the cytoplasm. The enzyme catalyses Transfers a segment of a (1-&gt;4)-alpha-D-glucan to a new position in an acceptor, which may be glucose or a (1-&gt;4)-alpha-D-glucan.. It catalyses the reaction Hydrolysis of (1-&gt;6)-alpha-D-glucosidic branch linkages in glycogen phosphorylase limit dextrin.. Its function is as follows. Multifunctional enzyme acting as 1,4-alpha-D-glucan:1,4-alpha-D-glucan 4-alpha-D-glycosyltransferase and amylo-1,6-glucosidase in glycogen degradation. The protein is Glycogen debranching enzyme (AGL) of Canis lupus familiaris (Dog).